A 317-amino-acid chain; its full sequence is MQILLANPRGFCAGVDRAISIVERAIEMYGAPIYVRHEVVHNRYVVDSLRERGAIFIEDIAEVPDGSILIFSAHGVSQAVRAEARARELTMLFDATCPLVTKVHMEVARASRKGKEAILIGHAGHPEVEGTMGQYNNPKGGMYLVESPDDVWKLNVKDENNLCFMTQTTLSVDDTSAVIDALHRRFPKIIGPRKDDICYATTNRQEAVRNLANDADVVLVVGSKNSSNSNRLAELAQRMGKPAYLIDSAADIQESWLQNAKCIGVTAGASAPDILVQQVIARLQALGAVGSVELRGREESIVFEVPKELRVEVKQVD.

Cysteine 12 is a [4Fe-4S] cluster binding site. Residues histidine 41 and histidine 74 each contribute to the (2E)-4-hydroxy-3-methylbut-2-enyl diphosphate site. Histidine 41 and histidine 74 together coordinate dimethylallyl diphosphate. Isopentenyl diphosphate contacts are provided by histidine 41 and histidine 74. Cysteine 97 contributes to the [4Fe-4S] cluster binding site. Histidine 125 provides a ligand contact to (2E)-4-hydroxy-3-methylbut-2-enyl diphosphate. Histidine 125 is a dimethylallyl diphosphate binding site. Histidine 125 lines the isopentenyl diphosphate pocket. Glutamate 127 functions as the Proton donor in the catalytic mechanism. Threonine 168 contacts (2E)-4-hydroxy-3-methylbut-2-enyl diphosphate. Cysteine 198 is a [4Fe-4S] cluster binding site. Positions 226, 227, 228, and 270 each coordinate (2E)-4-hydroxy-3-methylbut-2-enyl diphosphate. Serine 226, serine 227, asparagine 228, and serine 270 together coordinate dimethylallyl diphosphate. Residues serine 226, serine 227, asparagine 228, and serine 270 each contribute to the isopentenyl diphosphate site.

This sequence belongs to the IspH family. As to quaternary structure, homodimer. [4Fe-4S] cluster is required as a cofactor.

It catalyses the reaction isopentenyl diphosphate + 2 oxidized [2Fe-2S]-[ferredoxin] + H2O = (2E)-4-hydroxy-3-methylbut-2-enyl diphosphate + 2 reduced [2Fe-2S]-[ferredoxin] + 2 H(+). The catalysed reaction is dimethylallyl diphosphate + 2 oxidized [2Fe-2S]-[ferredoxin] + H2O = (2E)-4-hydroxy-3-methylbut-2-enyl diphosphate + 2 reduced [2Fe-2S]-[ferredoxin] + 2 H(+). It functions in the pathway isoprenoid biosynthesis; dimethylallyl diphosphate biosynthesis; dimethylallyl diphosphate from (2E)-4-hydroxy-3-methylbutenyl diphosphate: step 1/1. The protein operates within isoprenoid biosynthesis; isopentenyl diphosphate biosynthesis via DXP pathway; isopentenyl diphosphate from 1-deoxy-D-xylulose 5-phosphate: step 6/6. Functionally, catalyzes the conversion of 1-hydroxy-2-methyl-2-(E)-butenyl 4-diphosphate (HMBPP) into a mixture of isopentenyl diphosphate (IPP) and dimethylallyl diphosphate (DMAPP). Acts in the terminal step of the DOXP/MEP pathway for isoprenoid precursor biosynthesis. This chain is 4-hydroxy-3-methylbut-2-enyl diphosphate reductase, found in Yersinia enterocolitica serotype O:8 / biotype 1B (strain NCTC 13174 / 8081).